The chain runs to 212 residues: Thymidylate kinase (212 aa).

10–17 (GIDGCGKT) is a binding site for ATP.

It belongs to the thymidylate kinase family.

The enzyme catalyses dTMP + ATP = dTDP + ADP. In terms of biological role, phosphorylation of dTMP to form dTDP in both de novo and salvage pathways of dTTP synthesis. In Prochlorococcus marinus (strain MIT 9312), this protein is Thymidylate kinase.